The chain runs to 214 residues: A-type ATP synthase subunit D (214 aa).

Belongs to the V-ATPase D subunit family. Has multiple subunits with at least A(3), B(3), C, D, E, F, H, I and proteolipid K(x).

The protein localises to the cell membrane. In terms of biological role, component of the A-type ATP synthase that produces ATP from ADP in the presence of a proton gradient across the membrane. The chain is A-type ATP synthase subunit D from Thermococcus gammatolerans (strain DSM 15229 / JCM 11827 / EJ3).